Consider the following 440-residue polypeptide: 2-alpha-hydroxytaxane 2-O-benzoyltransferase (440 aa).

Catalysis depends on proton acceptor residues H158 and D367.

Belongs to the plant acyltransferase family.

The enzyme catalyses 10-deacetyl-2-debenzoylbaccatin III + benzoyl-CoA = 10-deacetylbaccatin III + CoA. It participates in alkaloid biosynthesis; taxol biosynthesis; baccatin III from 10-deacetyl-2-debenzoylbaccatin III: step 1/2. Its function is as follows. Catalyzes the conversion of 2-debenzoyl-7,13-diacetylbaccatin III, a semisynthetic substrate, to 7,13-diacetylbaccatin III. In Taxus cuspidata (Japanese yew), this protein is 2-alpha-hydroxytaxane 2-O-benzoyltransferase.